Reading from the N-terminus, the 82-residue chain is Small ribosomal subunit protein bS16 (82 aa).

It belongs to the bacterial ribosomal protein bS16 family.

This Yersinia pseudotuberculosis serotype O:1b (strain IP 31758) protein is Small ribosomal subunit protein bS16.